Consider the following 251-residue polypeptide: DNA repair protein RecO (251 aa).

This sequence belongs to the RecO family.

Functionally, involved in DNA repair and RecF pathway recombination. This chain is DNA repair protein RecO, found in Acidiphilium cryptum (strain JF-5).